Reading from the N-terminus, the 451-residue chain is Homeobox protein meis3-B (451 aa).

The disordered stretch occupies residues 33 to 64 (HHSLSQSTPYGSTGAAHRVPMPPGMGSNDGLK). The span at 34–43 (HSLSQSTPYG) shows a compositional bias: polar residues. Residues 102–185 (GGDVCSSDSF…PIDLVIDDRD (84 aa)) enclose the MEIS N-terminal domain. A disordered region spans residues 206 to 272 (NNTWIRDHDE…RDKKRNKKRG (67 aa)). The span at 218–230 (STHSGTPGPSSGG) shows a compositional bias: low complexity. Over residues 231-242 (LASQSGDNSSEQ) the composition is skewed to polar residues. The homeobox DNA-binding region spans 267 to 329 (RNKKRGIFPK…NARRRIVQPM (63 aa)).

The protein belongs to the TALE/MEIS homeobox family.

The protein resides in the nucleus. In terms of biological role, a caudalizing protein which is required to pattern the anterior/posterior (A/P) axis during central nervous system (CNS) formation. Inhibits anterior neural expression and acts as a transcriptional activator to induce posterior neural gene expression. Maintains a proper A/P balance required for hindbrain formation by activating the FGF/MAPK pathway, which modulates the planar cell polarity (PCP) pathway. Interacts with retinoid signaling during hindbrain patterning. The sequence is that of Homeobox protein meis3-B (meis3-b) from Xenopus laevis (African clawed frog).